Consider the following 37-residue polypeptide: Neuropeptide Y1-like conopeptide (37 aa).

F37 is modified (phenylalanine amide).

It belongs to the NPY family. Expressed by the venom duct.

The protein localises to the secreted. Causes hyperactivity such as jumping, rapid circling and tail flicking, when intraventricularly injected into mice brain. The chain is Neuropeptide Y1-like conopeptide from Conus betulinus (Beech cone).